A 283-amino-acid chain; its full sequence is ATP phosphoribosyltransferase (283 aa).

The protein belongs to the ATP phosphoribosyltransferase family. Long subfamily. It depends on Mg(2+) as a cofactor.

It is found in the cytoplasm. The catalysed reaction is 1-(5-phospho-beta-D-ribosyl)-ATP + diphosphate = 5-phospho-alpha-D-ribose 1-diphosphate + ATP. The protein operates within amino-acid biosynthesis; L-histidine biosynthesis; L-histidine from 5-phospho-alpha-D-ribose 1-diphosphate: step 1/9. With respect to regulation, feedback inhibited by histidine. Functionally, catalyzes the condensation of ATP and 5-phosphoribose 1-diphosphate to form N'-(5'-phosphoribosyl)-ATP (PR-ATP). Has a crucial role in the pathway because the rate of histidine biosynthesis seems to be controlled primarily by regulation of HisG enzymatic activity. This Bifidobacterium longum (strain DJO10A) protein is ATP phosphoribosyltransferase.